A 125-amino-acid chain; its full sequence is Cyclic diguanosine monophosphate-binding protein PA4608 (125 aa).

6-13 (DERRRFHR) provides a ligand contact to 3',3'-c-di-GMP. One can recognise a PilZ domain in the interval 7-103 (ERRRFHRIAF…SISHLRRLVE (97 aa)). The short motif at 9 to 13 (RRFHR) is the RXXXR motif; surrounds the surface of the c-di-GMP binding site element. Residues 35–40 (DVSLHG) carry the DXSXXG motif; surrounds the surface of the c-di-GMP binding site motif. W77 lines the 3',3'-c-di-GMP pocket.

Monomer in both c-di-GMP-bound and free forms.

Its function is as follows. Binds the second messenger bis-(3'-5') cyclic dimeric guanosine monophosphate (c-di-GMP). Can bind two c-di-GMP molecules per monomer. May play a role in bacterial second-messenger regulated processes. Binding to c-di-GMP induces a conformational change of the C- and N-termini resulting in the exposure of a highly negative surface on one side of the protein to a possible effector protein. The polypeptide is Cyclic diguanosine monophosphate-binding protein PA4608 (Pseudomonas aeruginosa (strain ATCC 15692 / DSM 22644 / CIP 104116 / JCM 14847 / LMG 12228 / 1C / PRS 101 / PAO1)).